The following is a 188-amino-acid chain: dCTP deaminase (188 aa).

DCTP is bound by residues 111–116 (KSTYAR), 135–137 (TLE), Q156, Y170, and Q180. E137 functions as the Proton donor/acceptor in the catalytic mechanism.

The protein belongs to the dCTP deaminase family. As to quaternary structure, homotrimer.

It catalyses the reaction dCTP + H2O + H(+) = dUTP + NH4(+). Its pathway is pyrimidine metabolism; dUMP biosynthesis; dUMP from dCTP (dUTP route): step 1/2. Functionally, catalyzes the deamination of dCTP to dUTP. The polypeptide is dCTP deaminase (Pseudomonas syringae pv. tomato (strain ATCC BAA-871 / DC3000)).